The following is a 710-amino-acid chain: Polyribonucleotide nucleotidyltransferase (710 aa).

Positions 491 and 497 each coordinate Mg(2+). One can recognise a KH domain in the interval Pro558–Ile618. Residues Gly628–Lys696 form the S1 motif domain.

The protein belongs to the polyribonucleotide nucleotidyltransferase family. The cofactor is Mg(2+).

The protein localises to the cytoplasm. The catalysed reaction is RNA(n+1) + phosphate = RNA(n) + a ribonucleoside 5'-diphosphate. In terms of biological role, involved in mRNA degradation. Catalyzes the phosphorolysis of single-stranded polyribonucleotides processively in the 3'- to 5'-direction. The sequence is that of Polyribonucleotide nucleotidyltransferase from Thermodesulfovibrio yellowstonii (strain ATCC 51303 / DSM 11347 / YP87).